We begin with the raw amino-acid sequence, 403 residues long: Na(+)/H(+) antiporter NhaH (403 aa).

12 helical membrane-spanning segments follow: residues 7–27 (VFIQILLLLAISVTVIAIAKL), 34–54 (VALVLVGLVLGLTQLPFIEEA), 99–119 (LAFLGTFISSLTIGAASYFLL), 125–145 (VAFTFAALMSATDPISVLSIF), 168–188 (IAVVLFKIASIYLLTYIEMGW), 196–216 (FMFLKFAVGGALVGLILGYVF), 228–245 (LEVAFSALLFFGSYFIAE), 250–272 (SGVIAVVVGGFVFGDYGAKIGMS), 282–302 (FWDSVTLLANALIFLMVGLEI), 311–331 (WGYIVGAIAIVLVGRTIAVYI), 345–365 (ILINWGGLRGSLSIALALSLP), and 373–393 (QVLLLTFSVVLFSLIVQGLTL).

The protein belongs to the monovalent cation:proton antiporter 1 (CPA1) transporter (TC 2.A.36) family.

The protein localises to the cell membrane. In terms of biological role, na(+)/H(+) antiporter that extrudes sodium in exchange for external protons. Can also transport lithium. This Halobacillus aidingensis protein is Na(+)/H(+) antiporter NhaH (nhaH).